Consider the following 159-residue polypeptide: ATP synthase subunit b 2 (159 aa).

A helical membrane pass occupies residues 1-21 (MDATFWAFIALVIFVAIVVYM).

It belongs to the ATPase B chain family. F-type ATPases have 2 components, F(1) - the catalytic core - and F(0) - the membrane proton channel. F(1) has five subunits: alpha(3), beta(3), gamma(1), delta(1), epsilon(1). F(0) has three main subunits: a(1), b(2) and c(10-14). The alpha and beta chains form an alternating ring which encloses part of the gamma chain. F(1) is attached to F(0) by a central stalk formed by the gamma and epsilon chains, while a peripheral stalk is formed by the delta and b chains.

Its subcellular location is the cell inner membrane. In terms of biological role, f(1)F(0) ATP synthase produces ATP from ADP in the presence of a proton or sodium gradient. F-type ATPases consist of two structural domains, F(1) containing the extramembraneous catalytic core and F(0) containing the membrane proton channel, linked together by a central stalk and a peripheral stalk. During catalysis, ATP synthesis in the catalytic domain of F(1) is coupled via a rotary mechanism of the central stalk subunits to proton translocation. Component of the F(0) channel, it forms part of the peripheral stalk, linking F(1) to F(0). The protein is ATP synthase subunit b 2 of Brucella suis (strain ATCC 23445 / NCTC 10510).